A 468-amino-acid polypeptide reads, in one-letter code: Sorting and assembly machinery component 50 homolog A (468 aa).

Positions 1–24 (MGTVHARSLDPLPMNGPDFGSPDD) are disordered. A POTRA domain is found at 44-124 (VVVQRVHFEG…LDVTFEVTEL (81 aa)).

It belongs to the SAM50/omp85 family. Associates with the mitochondrial contact site and cristae organizing system (MICOS) complex (also known as MINOS or MitOS complex).

Its subcellular location is the mitochondrion outer membrane. May play a role in the maintenance of the structure of mitochondrial cristae. The sequence is that of Sorting and assembly machinery component 50 homolog A (samm50-a) from Xenopus laevis (African clawed frog).